A 267-amino-acid polypeptide reads, in one-letter code: Zerumbone synthase (267 aa).

9–33 (LVTGGASGIGESIARLFIEHGAKIC) lines the NAD(+) pocket. S142 contributes to the substrate binding site. Y155 acts as the Proton acceptor in catalysis.

It belongs to the short-chain dehydrogenases/reductases (SDR) family. Expressed in leaves, stems and rhizomes.

The enzyme catalyses 10-hydroxy-alpha-humulene + NAD(+) = zerumbone + NADH + H(+). Catalyzes 8-hydroxy-alpha-humulene into zerumbone in presence of NAD. Also converts borneol to camphor in vitro. Zerumbone is a highly promising multi-anticancer agent. The protein is Zerumbone synthase (ZSD1) of Zingiber zerumbet (Shampoo ginger).